The primary structure comprises 205 residues: High frequency lysogenization protein HflD homolog (205 aa).

It belongs to the HflD family.

The protein resides in the cytoplasm. It localises to the cell inner membrane. The sequence is that of High frequency lysogenization protein HflD homolog from Shewanella baltica (strain OS155 / ATCC BAA-1091).